The following is a 319-amino-acid chain: mRNA decay activator protein ZFP36 (319 aa).

The interval 1 to 15 (MDLSAIYESLQSMSH) is necessary for nuclear export. Residues 1 to 92 (MDLSAIYESL…PTSPTATPTT (92 aa)) are necessary and sufficient for the association with mRNA decay enzymes and mRNA decay activation. Necessary for localization of ARE-containing mRNAs to processing bodies (PBs) regions lie at residues 1–166 (MDLS…DLAL) and 92–319 (TSSR…SVSE). Ser52 carries the post-translational modification Phosphoserine; by MAPKAPK2. Ser58 bears the Phosphoserine mark. The P-P-P-P-G repeat unit spans residues 63-67 (PPPPG). The segment covering 65–84 (PPGFAPLAPRPGPELSPSPT) has biased composition (pro residues). A disordered region spans residues 65–95 (PPGFAPLAPRPGPELSPSPTSPTATPTTSSR). Ser80 and Ser82 each carry phosphoserine. Thr84 bears the Phosphothreonine mark. Ser85 bears the Phosphoserine mark. The span at 85–94 (SPTATPTTSS) shows a compositional bias: low complexity. The tract at residues 87-160 (TATPTTSSRY…GSRCHFIHNP (74 aa)) is necessary for nuclear localization. The necessary for RNA-binding stretch occupies residues 89–165 (TPTTSSRYKT…FIHNPTEDLA (77 aa)). 2 C3H1-type zinc fingers span residues 95 to 123 (RYKT…HGLG) and 133 to 161 (KYKT…HNPT). Positions 95–186 (RYKTELCRTY…ISFSGLPSGR (92 aa)) are necessary for interaction with PABPN1. The tract at residues 166–319 (LPGQPHVLRQ…PIFNRISVSE (154 aa)) is necessary for mRNA decay activation. Ser178 is subject to Phosphoserine; by MAPKAPK2. Residues 179–188 (FSGLPSGRRS) show a composition bias toward low complexity. The interval 179–309 (FSGLPSGRRS…PQTPAPPRRL (131 aa)) is disordered. Ser189 carries the phosphoserine modification. Residues 190-194 (PPPPG) form a P-P-P-P-G repeat. Residues 196-208 (SGPSLSSCSFSPS) show a composition bias toward low complexity. Residue Ser210 is modified to Phosphoserine. One copy of the P-P-P-P-G repeat lies at 211–215 (PPPPG). Ser220 carries the phosphoserine; by MAPK1; in vitro modification. Phosphothreonine is present on Thr250. Phosphoserine occurs at positions 269, 289, and 316. Residues 279–289 (SSGSSLGGSDS) are compositionally biased toward low complexity. Positions 305 to 319 (PPRRLPIFNRISVSE) are interaction with CNOT1.

As to quaternary structure, associates with cytoplasmic CCR4-NOT and PAN2-PAN3 deadenylase complexes to trigger ARE-containing mRNA deadenylation and decay processes. Part of a mRNA decay activation complex at least composed of poly(A)-specific exoribonucleases CNOT6, EXOSC2 and XRN1 and mRNA-decapping enzymes DCP1A and DCP2. Associates with the RNA exosome complex. Interacts (via phosphorylated form) with 14-3-3 proteins; these interactions promote exclusion of ZFP36 from cytoplasmic stress granules in response to arsenite treatment in a MAPKAPK2-dependent manner and does not prevent CCR4-NOT deadenylase complex recruitment or ZFP36-induced ARE-containing mRNA deadenylation and decay processes. Interacts with 14-3-3 proteins; these interactions occur in response to rapamycin in an Akt-dependent manner. Interacts with AGO2 and AGO4. Interacts (via C-terminus) with CNOT1; this interaction occurs in a RNA-independent manner and induces mRNA deadenylation. Interacts (via N-terminus) with CNOT6. Interacts with CNOT6L. Interacts (via C-terminus) with CNOT7; this interaction occurs in a RNA-independent manner, induces mRNA deadenylation and is inhibited in a phosphorylation MAPKAPK2-dependent manner. Interacts (via unphosphorylated form) with CNOT8; this interaction occurs in a RNA-independent manner and is inhibited in a phosphorylation MAPKAPK2-dependent manner. Interacts with DCP1A. Interacts (via N-terminus) with DCP2. Interacts with EDC3. Interacts (via N-terminus) with EXOSC2. Interacts with heat shock 70 kDa proteins. Interacts with KHSRP; this interaction increases upon cytokine-induced treatment. Interacts with MAP3K4; this interaction enhances the association with SH3KBP1/CIN85. Interacts with MAPKAPK2; this interaction occurs upon skeletal muscle satellite cell activation. Interacts with NCL. Interacts with NUP214; this interaction increases upon lipopolysaccharide (LPS) stimulation. Interacts with PABPC1; this interaction occurs in a RNA-dependent manner. Interacts (via hypophosphorylated form) with PABPN1 (via RRM domain and C-terminal arginine-rich region); this interaction occurs in the nucleus in a RNA-independent manner, decreases in presence of single-stranded poly(A) RNA-oligomer and in a p38 MAPK-dependent-manner and inhibits nuclear poly(A) tail synthesis. Interacts with PAN2. Interacts (via C3H1-type zinc finger domains) with PKM. Interacts (via C3H1-type zinc finger domains) with nuclear RNA poly(A) polymerase. Interacts with PPP2CA; this interaction occurs in LPS-stimulated cells and induces ZFP36 dephosphorylation, and hence may promote ARE-containing mRNAs decay. Interacts (via C-terminus) with PRR5L (via C-terminus); this interaction may accelerate ZFP36-mediated mRNA decay during stress. Interacts (via C-terminus) with SFN; this interaction occurs in a phosphorylation-dependent manner. Interacts (via extreme C-terminal region) with SH3KBP1/CIN85 (via SH3 domains); this interaction enhances MAP3K4-induced phosphorylation of ZFP36 at Ser-58 and Ser-85 and does not alter neither ZFP36 binding to ARE-containing transcripts nor TNF-alpha mRNA decay. Interacts with XRN1. Interacts (via C-terminus and Ser-178 phosphorylated form) with YWHAB; this interaction occurs in a p38/MAPKAPK2-dependent manner, increases cytoplasmic localization of ZFP36 and protects ZFP36 from Ser-178 dephosphorylation by serine/threonine phosphatase 2A, and hence may be crucial for stabilizing ARE-containing mRNAs. Interacts (via phosphorylated form) with YWHAE. Interacts (via C-terminus) with YWHAG; this interaction occurs in a phosphorylation-dependent manner. Interacts with YWHAH; this interaction occurs in a phosphorylation-dependent manner. Interacts with YWHAQ; this interaction occurs in a phosphorylation-dependent manner. Interacts with (via C-terminus) YWHAZ; this interaction occurs in a phosphorylation-dependent manner. Does not interact with SH3KBP1. Interacts (via the 4EHP-binding motif) with EIF4E2; the interaction is direct. Interacts (via P-P-P-P-G repeats) with GIGYF2; the interaction is direct. Phosphorylated. Phosphorylation at serine and/or threonine residues occurs in a p38 MAPK- and MAPKAPK2-dependent manner. Phosphorylated by MAPKAPK2 at Ser-52 and Ser-178; phosphorylation increases its stability and cytoplasmic localization, promotes binding to 14-3-3 adapter proteins and inhibits the recruitment of cytoplasmic CCR4-NOT and PAN2-PAN3 deadenylase complexes to the mRNA decay machinery, thereby inhibiting ZFP36-induced ARE-containing mRNA deadenylation and decay processes. Phosphorylation by MAPKAPK2 does not impair ARE-containing RNA-binding. Phosphorylated in a MAPKAPK2- and p38 MAPK-dependent manner upon skeletal muscle satellite cell activation; this phosphorylation inhibits ZFP36-mediated mRNA decay activity, and hence stabilizes MYOD1 mRNA. Phosphorylated by MAPK1 upon mitogen stimulation. Phosphorylated at Ser-58 and Ser-85; these phosphorylations increase in a SH3KBP1-dependent manner. Phosphorylated at serine and threonine residues in a pyruvate kinase PKM- and p38 MAPK-dependent manner. Phosphorylation at Ser-52 may participate in the PKM-mediated degradation of ZFP36 in a p38 MAPK-dependent manner. Dephosphorylated by serine/threonine phosphatase 2A at Ser-178. Post-translationally, ubiquitinated; pyruvate kinase (PKM)-dependent ubiquitination leads to proteasomal degradation through a p38 MAPK signaling pathway. In terms of tissue distribution, expressed in skeletal muscle satellite cells. Strongly expressed in differentiated adipocytes compared to preadipocytes (at protein level). Expressed in embryonic stem cells (ESCs). Expressed in heart, placenta, kidney, intestine, liver, lung, thymus, fat and spleen.

It localises to the nucleus. The protein resides in the cytoplasm. It is found in the cytoplasmic granule. Its subcellular location is the P-body. Functionally, zinc-finger RNA-binding protein that destabilizes numerous cytoplasmic AU-rich element (ARE)-containing mRNA transcripts by promoting their poly(A) tail removal or deadenylation, and hence provide a mechanism for attenuating protein synthesis. Acts as an 3'-untranslated region (UTR) ARE mRNA-binding adapter protein to communicate signaling events to the mRNA decay machinery. Recruits deadenylase CNOT7 (and probably the CCR4-NOT complex) via association with CNOT1, and hence promotes ARE-mediated mRNA deadenylation. Also functions by recruiting components of the cytoplasmic RNA decay machinery to the bound ARE-containing mRNAs. Self-regulates by destabilizing its own mRNA. Binds to 3'-UTR ARE of numerous mRNAs and of its own mRNA. Plays a role in anti-inflammatory responses; suppresses tumor necrosis factor (TNF)-alpha production by stimulating ARE-mediated TNF-alpha mRNA decay and several other inflammatory ARE-containing mRNAs in interferon (IFN)- and/or lipopolysaccharide (LPS)-induced macrophages. Also plays a role in the regulation of dendritic cell maturation at the post-transcriptional level, and hence operates as part of a negative feedback loop to limit the inflammatory response. Promotes ARE-mediated mRNA decay of hypoxia-inducible factor HIF1A mRNA during the response of endothelial cells to hypoxia. Positively regulates early adipogenesis of preadipocytes by promoting ARE-mediated mRNA decay of immediate early genes (IEGs). Negatively regulates hematopoietic/erythroid cell differentiation by promoting ARE-mediated mRNA decay of the transcription factor STAT5B mRNA. Plays a role in maintaining skeletal muscle satellite cell quiescence by promoting ARE-mediated mRNA decay of the myogenic determination factor MYOD1 mRNA. Also associates with and regulates the expression of non-ARE-containing target mRNAs at the post-transcriptional level, such as MHC class I mRNAs. Participates in association with argonaute RISC catalytic components in the ARE-mediated mRNA decay mechanism; assists microRNA (miRNA) targeting ARE-containing mRNAs. May also play a role in the regulation of cytoplasmic mRNA decapping; enhances decapping of ARE-containing RNAs, in vitro. Involved in the delivery of target ARE-mRNAs to processing bodies (PBs). In addition to its cytosolic mRNA-decay function, affects nuclear pre-mRNA processing. Negatively regulates nuclear poly(A)-binding protein PABPN1-stimulated polyadenylation activity on ARE-containing pre-mRNA during LPS-stimulated macrophages. Also involved in the regulation of stress granule (SG) and P-body (PB) formation and fusion. Plays a role in the regulation of keratinocyte proliferation, differentiation and apoptosis. Plays a role as a tumor suppressor by inhibiting cell proliferation in breast cancer cells. The sequence is that of mRNA decay activator protein ZFP36 from Mus musculus (Mouse).